The primary structure comprises 147 residues: Cilia- and flagella-associated protein 90 (147 aa).

The tract at residues 1–36 is disordered; that stretch reads MEDDEEETTASTLRGKPRPPPVSAQSAFSYIPPRRL.

As to quaternary structure, microtubule inner protein component of sperm flagellar doublet microtubules.

The protein localises to the cytoplasm. It is found in the cytoskeleton. The protein resides in the cilium axoneme. It localises to the flagellum axoneme. Its function is as follows. Microtubule inner protein (MIP) part of the dynein-decorated doublet microtubules (DMTs) in cilia axoneme, which is required for motile cilia beating. This chain is Cilia- and flagella-associated protein 90, found in Homo sapiens (Human).